A 275-amino-acid polypeptide reads, in one-letter code: Dermonecrotic toxin LamSicTox-alphaIV1ii (275 aa).

His5 is an active-site residue. The Mg(2+) site is built by Glu25 and Asp27. His41 serves as the catalytic Nucleophile. 2 disulfides stabilise this stretch: Cys45/Cys51 and Cys47/Cys192. Asp85 lines the Mg(2+) pocket.

Belongs to the arthropod phospholipase D family. Class II subfamily. Mg(2+) serves as cofactor. In terms of tissue distribution, expressed by the venom gland.

It localises to the secreted. The enzyme catalyses an N-(acyl)-sphingosylphosphocholine = an N-(acyl)-sphingosyl-1,3-cyclic phosphate + choline. The catalysed reaction is an N-(acyl)-sphingosylphosphoethanolamine = an N-(acyl)-sphingosyl-1,3-cyclic phosphate + ethanolamine. It catalyses the reaction a 1-acyl-sn-glycero-3-phosphocholine = a 1-acyl-sn-glycero-2,3-cyclic phosphate + choline. It carries out the reaction a 1-acyl-sn-glycero-3-phosphoethanolamine = a 1-acyl-sn-glycero-2,3-cyclic phosphate + ethanolamine. Dermonecrotic toxins cleave the phosphodiester linkage between the phosphate and headgroup of certain phospholipids (sphingolipid and lysolipid substrates), forming an alcohol (often choline) and a cyclic phosphate. This toxin acts on sphingomyelin (SM). It may also act on ceramide phosphoethanolamine (CPE), lysophosphatidylcholine (LPC) and lysophosphatidylethanolamine (LPE), but not on lysophosphatidylserine (LPS), and lysophosphatidylglycerol (LPG). It acts by transphosphatidylation, releasing exclusively cyclic phosphate products as second products. Induces dermonecrosis, hemolysis, increased vascular permeability, edema, inflammatory response, and platelet aggregation. The protein is Dermonecrotic toxin LamSicTox-alphaIV1ii of Loxosceles amazonica (Recluse spider).